Consider the following 170-residue polypeptide: Transcriptional repressor NrdR (170 aa).

A zinc finger lies at 3 to 34 (CPFCRHPDSRVVDSRTTDDGTSIRRRRQCPDC). Residues 46 to 136 (LMVVKRSGVT…VYRAFDSLED (91 aa)) form the ATP-cone domain. A disordered region spans residues 148 to 170 (RPSAEDRGSGETLEVPAPAIAAD).

Belongs to the NrdR family. It depends on Zn(2+) as a cofactor.

Its function is as follows. Negatively regulates transcription of bacterial ribonucleotide reductase nrd genes and operons by binding to NrdR-boxes. The polypeptide is Transcriptional repressor NrdR (Streptomyces griseus subsp. griseus (strain JCM 4626 / CBS 651.72 / NBRC 13350 / KCC S-0626 / ISP 5235)).